The chain runs to 334 residues: MCDQYCISFADVEKAHINIRDFIHLTPVLTSSILNQITGRNLFFKCELFQKTGSFKIRGALNAIRGLISAHPEEKPRAVVAHSSGNHGQALSFAARLEGIPAYVIVPETAPNCKKLAIQAYGASIVYSEQSEESRENITKRIAEETEGIMVHPNQEPAVIAGQGTIAMEVLNQVPLVDALVVPVGGGGMLAGIAVTVKALRPSVKVYAAEPLNADDCYQSKLKGELTPNPYPPETIADGIKSSIGLNTWPIIRDLVDDVFTVTEDEIKYATQLVWERMKLLIEPTAGVGVAVVLSQHFRTVPAEVKNICIVLSGGNVDLTSLTWVKKQDEKAAP.

Position 13 (glutamate 13) interacts with Mg(2+). Residues serine 31, serine 32, isoleucine 33, lysine 51, and threonine 52 each contribute to the ATP site. Catalysis depends on proton acceptor residues lysine 56 and serine 84. The residue at position 56 (lysine 56) is an N6-(pyridoxal phosphate)lysine. Asparagine 86 is a pyridoxal 5'-phosphate binding site. Glutamine 89 serves as a coordination point for ATP. At cysteine 113 the chain carries S-nitrosocysteine. Tyrosine 121 contributes to the ATP binding site. Asparagine 154 contacts pyridoxal 5'-phosphate. Aspartate 178 contacts Mg(2+). Glycine 185, glycine 186, glycine 187, glycine 188, and methionine 189 together coordinate pyridoxal 5'-phosphate. Mg(2+) is bound by residues glutamate 210, alanine 214, aspartate 216, and asparagine 247. Ca(2+)-binding residues include glutamate 210, alanine 214, aspartate 216, and asparagine 247. The Mn(2+) site is built by glutamate 210, alanine 214, and aspartate 216. Lysine 279 is an ATP binding site. Pyridoxal 5'-phosphate is bound at residue serine 313. Asparagine 316 provides a ligand contact to ATP.

The protein belongs to the serine/threonine dehydratase family. As to quaternary structure, homodimer. It depends on Mg(2+) as a cofactor. Mn(2+) serves as cofactor. Requires Ca(2+) as cofactor. Pyridoxal 5'-phosphate is required as a cofactor. In terms of processing, S-nitrosylated, leading to decrease the enzyme activity.

The catalysed reaction is L-serine = D-serine. It carries out the reaction L-serine = pyruvate + NH4(+). It catalyses the reaction D-serine = pyruvate + NH4(+). Its function is as follows. Catalyzes the synthesis of D-serine from L-serine. D-serine is a key coagonist with glutamate at NMDA receptors. Has dehydratase activity towards both L-serine and D-serine. This is Serine racemase (SRR) from Bos taurus (Bovine).